The sequence spans 74 residues: uncharacterized protein (74 aa).

The N-terminal stretch at 1-25 (MMMTDLPENIRKTAVALLRLGEATA) is a signal peptide.

This is an uncharacterized protein from Archaeoglobus fulgidus (strain ATCC 49558 / DSM 4304 / JCM 9628 / NBRC 100126 / VC-16).